We begin with the raw amino-acid sequence, 222 residues long: MFTKEVTDSKLYKWFNERLEIQAISDDISSKYVPPHVNIFYCLGGITLTCFIIQFATGFAMTFYYKPTVAEAFTSVQYIMNEVNFGWLIRSIHRWSASMMVLMMILHIFRVYLTGGFKRPRELTWITGVIMATITVSFGVTGYSLPWDQVGYWAVKIVSGVPAAIPVVGDQMVELLRGGASVGQATLTRFYSLHTFVLPWLIAVFMLAHFLMIRKQGISGPL.

Residues 39–59 (IFYCLGGITLTCFIIQFATGF) traverse the membrane as a helical segment. Position 42 (Cys42) interacts with heme c. 2 residues coordinate heme b: His93 and His107. The next 3 membrane-spanning stretches (helical) occupy residues 97–117 (ASMMVLMMILHIFRVYLTGGF), 123–143 (LTWITGVIMATITVSFGVTGY), and 193–213 (LHTFVLPWLIAVFMLAHFLMI). Positions 194 and 209 each coordinate heme b.

The protein belongs to the cytochrome b family. PetB subfamily. The 4 large subunits of the cytochrome b6-f complex are cytochrome b6, subunit IV (17 kDa polypeptide, PetD), cytochrome f and the Rieske protein, while the 4 small subunits are PetG, PetL, PetM and PetN. The complex functions as a dimer. The cofactor is heme b. Heme c is required as a cofactor.

Its subcellular location is the cellular thylakoid membrane. In terms of biological role, component of the cytochrome b6-f complex, which mediates electron transfer between photosystem II (PSII) and photosystem I (PSI), cyclic electron flow around PSI, and state transitions. The chain is Cytochrome b6 (petB) from Picosynechococcus sp. (strain ATCC 27264 / PCC 7002 / PR-6) (Agmenellum quadruplicatum).